A 236-amino-acid chain; its full sequence is MTRRYWNINLEEMMEAGVHFGHGTRKWNPRMAPYISAKRKGIHITNLTRTARFLSEACDLVFDAASRGKQFLIVGTKNKAADSVASAAIRARCHYVNKKWLGGMSTNWSTTETRLHKFRDLRAEQKTGRFNRLPKRDAAMLKRQLSHLQTYLGGIKYMTGLPDIVIIVDQQEEYTALRECVTLGIPTICLIDTNCDPDLADISIPANDDAIASIRFILNKLVSAICEGRSSYIRNR.

Belongs to the universal ribosomal protein uS2 family.

It localises to the plastid. Its subcellular location is the chloroplast. The protein is Small ribosomal subunit protein uS2c (rps2) of Nandina domestica (Heavenly bamboo).